The sequence spans 107 residues: N(4)-acetylcytidine amidohydrolase (107 aa).

The ASCH domain occupies 6–102 (TFYRRFQADI…RLYVISFSLV (97 aa)). K20 serves as the catalytic Proton acceptor. Catalysis depends on T23, which acts as the Nucleophile. E73 (proton donor) is an active-site residue.

The protein belongs to the N(4)-acetylcytidine amidohydrolase family.

The enzyme catalyses N(4)-acetylcytidine + H2O = cytidine + acetate + H(+). It catalyses the reaction N(4)-acetyl-2'-deoxycytidine + H2O = 2'-deoxycytidine + acetate + H(+). The catalysed reaction is N(4)-acetylcytosine + H2O = cytosine + acetate + H(+). Catalyzes the hydrolysis of N(4)-acetylcytidine (ac4C). This chain is N(4)-acetylcytidine amidohydrolase, found in Edwardsiella ictaluri (strain 93-146).